Here is a 55-residue protein sequence, read N- to C-terminus: Large ribosomal subunit protein bL33 (55 aa).

The protein belongs to the bacterial ribosomal protein bL33 family.

The protein is Large ribosomal subunit protein bL33 of Yersinia enterocolitica serotype O:8 / biotype 1B (strain NCTC 13174 / 8081).